An 80-amino-acid chain; its full sequence is Bowman-Birk type proteinase inhibitor DE-4 (80 aa).

The span at 1–10 (DDDHSDDEPR) shows a compositional bias: acidic residues. A disordered region spans residues 1–29 (DDDHSDDEPRESESSKPCCSSCCTRSRPP). Residues 15–29 (SKPCCSSCCTRSRPP) are compositionally biased toward low complexity. Cystine bridges form between Cys-18–Cys-71, Cys-19–Cys-33, Cys-22–Cys-67, Cys-23–Cys-31, Cys-41–Cys-48, Cys-45–Cys-60, and Cys-50–Cys-58.

Belongs to the Bowman-Birk serine protease inhibitor family.

This chain is Bowman-Birk type proteinase inhibitor DE-4, found in Philenoptera violacea (Apple-leaf).